The primary structure comprises 489 residues: ATP synthase subunit beta 1 (489 aa).

159–166 (GGAGVGKT) is an ATP binding site. The span at 465–477 (EKSKKAAEDKPKA) shows a compositional bias: basic and acidic residues. The tract at residues 465-489 (EKSKKAAEDKPKAEEDEDATSLHDA) is disordered.

The protein belongs to the ATPase alpha/beta chains family. In terms of assembly, F-type ATPases have 2 components, CF(1) - the catalytic core - and CF(0) - the membrane proton channel. CF(1) has five subunits: alpha(3), beta(3), gamma(1), delta(1), epsilon(1). CF(0) has three main subunits: a(1), b(2) and c(9-12). The alpha and beta chains form an alternating ring which encloses part of the gamma chain. CF(1) is attached to CF(0) by a central stalk formed by the gamma and epsilon chains, while a peripheral stalk is formed by the delta and b chains.

Its subcellular location is the cell inner membrane. It carries out the reaction ATP + H2O + 4 H(+)(in) = ADP + phosphate + 5 H(+)(out). Produces ATP from ADP in the presence of a proton gradient across the membrane. The catalytic sites are hosted primarily by the beta subunits. This Marinomonas sp. (strain MWYL1) protein is ATP synthase subunit beta 1.